A 200-amino-acid chain; its full sequence is Ciliary neurotrophic factor (200 aa).

Belongs to the CNTF family. In terms of tissue distribution, nervous system.

Its subcellular location is the cytoplasm. In terms of biological role, CNTF is a survival factor for various neuronal cell types. Seems to prevent the degeneration of motor axons after axotomy. In Sus scrofa (Pig), this protein is Ciliary neurotrophic factor (CNTF).